Here is a 304-residue protein sequence, read N- to C-terminus: Dihydroorotate dehydrogenase B (NAD(+)), catalytic subunit (304 aa).

Residues S21 and 45–46 each bind FMN; that span reads KA. Residues K45 and 69 to 73 each bind substrate; that span reads NAIGL. FMN-binding residues include N99 and N127. N127 contacts substrate. C130 serves as the catalytic Nucleophile. FMN-binding residues include K165 and I191. 192 to 193 serves as a coordination point for substrate; that stretch reads NT. Residues G217, 243 to 244, and 265 to 266 each bind FMN; these read GG and GT.

Belongs to the dihydroorotate dehydrogenase family. Type 1 subfamily. Heterotetramer of 2 PyrK and 2 PyrD type B subunits. FMN serves as cofactor.

The protein resides in the cytoplasm. The enzyme catalyses (S)-dihydroorotate + NAD(+) = orotate + NADH + H(+). It functions in the pathway pyrimidine metabolism; UMP biosynthesis via de novo pathway; orotate from (S)-dihydroorotate (NAD(+) route): step 1/1. Catalyzes the conversion of dihydroorotate to orotate with NAD(+) as electron acceptor. The sequence is that of Dihydroorotate dehydrogenase B (NAD(+)), catalytic subunit (pyrD) from Listeria monocytogenes serovar 1/2a (strain ATCC BAA-679 / EGD-e).